Consider the following 568-residue polypeptide: Small ribosomal subunit protein bS1 (568 aa).

6 S1 motif domains span residues 27 to 93, 111 to 177, 198 to 266, 283 to 353, 370 to 440, and 459 to 530; these read GYVA…LSRE, GERV…VSRR, GQVV…LGMK, GKKI…LGLK, GTEV…LGIK, and NAVV…LSIK.

The protein belongs to the bacterial ribosomal protein bS1 family.

Functionally, binds mRNA; thus facilitating recognition of the initiation point. It is needed to translate mRNA with a short Shine-Dalgarno (SD) purine-rich sequence. The protein is Small ribosomal subunit protein bS1 (rpsA) of Rhizobium meliloti (strain 1021) (Ensifer meliloti).